We begin with the raw amino-acid sequence, 324 residues long: Beta-ketoacyl-[acyl-carrier-protein] synthase III (324 aa).

Catalysis depends on residues Cys112 and His249. The tract at residues Gln250–Arg254 is ACP-binding. The active site involves Asn279.

The protein belongs to the thiolase-like superfamily. FabH family. Homodimer.

Its subcellular location is the cytoplasm. The catalysed reaction is malonyl-[ACP] + acetyl-CoA + H(+) = 3-oxobutanoyl-[ACP] + CO2 + CoA. The protein operates within lipid metabolism; fatty acid biosynthesis. Functionally, catalyzes the condensation reaction of fatty acid synthesis by the addition to an acyl acceptor of two carbons from malonyl-ACP. Catalyzes the first condensation reaction which initiates fatty acid synthesis and may therefore play a role in governing the total rate of fatty acid production. Possesses both acetoacetyl-ACP synthase and acetyl transacylase activities. Its substrate specificity determines the biosynthesis of branched-chain and/or straight-chain of fatty acids. The sequence is that of Beta-ketoacyl-[acyl-carrier-protein] synthase III from Streptococcus pyogenes serotype M3 (strain ATCC BAA-595 / MGAS315).